Here is a 156-residue protein sequence, read N- to C-terminus: MRRRKAPVREVMPDPIYGNKIITKFINSLMYDGKKSVATEIMYGALKTIDAKGGDLKGINVFNDAIDNVKPIMEVKSRRVGGATYQVPVEVRPARQQALAIRWIISFARKRSERTMMEKLAAELLDAANSKGASFKKKEDTYKMAEANKAFAHYRW.

This sequence belongs to the universal ribosomal protein uS7 family. In terms of assembly, part of the 30S ribosomal subunit. Contacts proteins S9 and S11.

In terms of biological role, one of the primary rRNA binding proteins, it binds directly to 16S rRNA where it nucleates assembly of the head domain of the 30S subunit. Is located at the subunit interface close to the decoding center, probably blocks exit of the E-site tRNA. The chain is Small ribosomal subunit protein uS7 from Campylobacter fetus subsp. fetus (strain 82-40).